Consider the following 367-residue polypeptide: NAD(P)H-quinone oxidoreductase subunit 1, chloroplastic (367 aa).

A run of 7 helical transmembrane segments spans residues 30-50, 98-118, 127-147, 164-184, 273-293, 304-324, and 340-360; these read LFPI…IVWL, FSIG…VIPF, LSIG…GLLM, AAAQ…SISL, LFVT…IFVP, VFGT…FLFI, and LLNL…LLTT.

The protein belongs to the complex I subunit 1 family. NDH is composed of at least 16 different subunits, 5 of which are encoded in the nucleus.

It localises to the plastid. The protein resides in the chloroplast thylakoid membrane. The catalysed reaction is a plastoquinone + NADH + (n+1) H(+)(in) = a plastoquinol + NAD(+) + n H(+)(out). It carries out the reaction a plastoquinone + NADPH + (n+1) H(+)(in) = a plastoquinol + NADP(+) + n H(+)(out). Its function is as follows. NDH shuttles electrons from NAD(P)H:plastoquinone, via FMN and iron-sulfur (Fe-S) centers, to quinones in the photosynthetic chain and possibly in a chloroplast respiratory chain. The immediate electron acceptor for the enzyme in this species is believed to be plastoquinone. Couples the redox reaction to proton translocation, and thus conserves the redox energy in a proton gradient. In Nicotiana tabacum (Common tobacco), this protein is NAD(P)H-quinone oxidoreductase subunit 1, chloroplastic.